Here is a 315-residue protein sequence, read N- to C-terminus: DNA-directed RNA polymerase subunit alpha (315 aa).

An alpha N-terminal domain (alpha-NTD) region spans residues Met-1–Thr-228. The tract at residues Lys-245 to Glu-315 is alpha C-terminal domain (alpha-CTD).

It belongs to the RNA polymerase alpha chain family. Homodimer. The RNAP catalytic core consists of 2 alpha, 1 beta, 1 beta' and 1 omega subunit. When a sigma factor is associated with the core the holoenzyme is formed, which can initiate transcription.

The catalysed reaction is RNA(n) + a ribonucleoside 5'-triphosphate = RNA(n+1) + diphosphate. Its function is as follows. DNA-dependent RNA polymerase catalyzes the transcription of DNA into RNA using the four ribonucleoside triphosphates as substrates. In Clostridioides difficile (strain 630) (Peptoclostridium difficile), this protein is DNA-directed RNA polymerase subunit alpha.